A 105-amino-acid chain; its full sequence is MADFLGMMKQAAQLQSKMKEMQSELDRIEVEGISGGGLVNVRMSAKMEVRAVKIDPSLLNPDEVGVLEDLLVSALADAHRKAEAAMQDKMKTLTGGLSLPPGLGL.

The protein belongs to the YbaB/EbfC family. Homodimer.

It localises to the cytoplasm. It is found in the nucleoid. Binds to DNA and alters its conformation. May be involved in regulation of gene expression, nucleoid organization and DNA protection. In Rhodopseudomonas palustris (strain BisA53), this protein is Nucleoid-associated protein RPE_4812.